Consider the following 165-residue polypeptide: Nucleotide-binding protein PMT9312_0481 (165 aa).

It belongs to the YajQ family.

Its function is as follows. Nucleotide-binding protein. This is Nucleotide-binding protein PMT9312_0481 from Prochlorococcus marinus (strain MIT 9312).